A 232-amino-acid polypeptide reads, in one-letter code: Phosphatidylserine decarboxylase proenzyme (232 aa).

Serine 190 (schiff-base intermediate with substrate; via pyruvic acid) is an active-site residue. Serine 190 is modified (pyruvic acid (Ser); by autocatalysis).

Belongs to the phosphatidylserine decarboxylase family. PSD-A subfamily. As to quaternary structure, heterodimer of a large membrane-associated beta subunit and a small pyruvoyl-containing alpha subunit. Pyruvate is required as a cofactor. In terms of processing, is synthesized initially as an inactive proenzyme. Formation of the active enzyme involves a self-maturation process in which the active site pyruvoyl group is generated from an internal serine residue via an autocatalytic post-translational modification. Two non-identical subunits are generated from the proenzyme in this reaction, and the pyruvate is formed at the N-terminus of the alpha chain, which is derived from the carboxyl end of the proenzyme. The post-translation cleavage follows an unusual pathway, termed non-hydrolytic serinolysis, in which the side chain hydroxyl group of the serine supplies its oxygen atom to form the C-terminus of the beta chain, while the remainder of the serine residue undergoes an oxidative deamination to produce ammonia and the pyruvoyl prosthetic group on the alpha chain.

It is found in the cell membrane. It catalyses the reaction a 1,2-diacyl-sn-glycero-3-phospho-L-serine + H(+) = a 1,2-diacyl-sn-glycero-3-phosphoethanolamine + CO2. The protein operates within phospholipid metabolism; phosphatidylethanolamine biosynthesis; phosphatidylethanolamine from CDP-diacylglycerol: step 2/2. In terms of biological role, catalyzes the formation of phosphatidylethanolamine (PtdEtn) from phosphatidylserine (PtdSer). Important for establishment of root nodule symbiosis with the host plant. The chain is Phosphatidylserine decarboxylase proenzyme from Rhizobium meliloti (strain 1021) (Ensifer meliloti).